A 313-amino-acid polypeptide reads, in one-letter code: uncharacterized protein (313 aa).

Residues 1–313 are disordered; it reads MSRNGRNDYD…SSSRSGSSRR (313 aa). Basic and acidic residues-rich tracts occupy residues 24 to 33, 40 to 85, 95 to 116, and 156 to 181; these read LARDRERDSE, TGER…DVKY, TTRE…DELG, and TDER…DEFG. Over residues 194–205 the composition is skewed to basic residues; sequence RGRRSNSRRRSS. Composition is skewed to low complexity over residues 206–266 and 272–313; these read NARS…GSKS and SRSG…SSRR.

Its subcellular location is the virion. This is an uncharacterized protein from Acanthamoeba polyphaga mimivirus (APMV).